Reading from the N-terminus, the 419-residue chain is L-rhamnose isomerase (419 aa).

3 residues coordinate Mn(2+): His262, Asp294, and Asp296.

Belongs to the rhamnose isomerase family. In terms of assembly, homotetramer. Mn(2+) serves as cofactor.

The protein resides in the cytoplasm. The enzyme catalyses L-rhamnopyranose = L-rhamnulose. The protein operates within carbohydrate degradation; L-rhamnose degradation; glycerone phosphate from L-rhamnose: step 1/3. In terms of biological role, catalyzes the interconversion of L-rhamnose and L-rhamnulose. The polypeptide is L-rhamnose isomerase (Shigella boydii serotype 4 (strain Sb227)).